The following is a 500-amino-acid chain: L-arabinose isomerase (500 aa).

Positions 306, 333, 350, and 450 each coordinate Mn(2+).

It belongs to the arabinose isomerase family. Homohexamer. The cofactor is Mn(2+).

The enzyme catalyses beta-L-arabinopyranose = L-ribulose. Its pathway is carbohydrate degradation; L-arabinose degradation via L-ribulose; D-xylulose 5-phosphate from L-arabinose (bacterial route): step 1/3. In terms of biological role, catalyzes the conversion of L-arabinose to L-ribulose. The polypeptide is L-arabinose isomerase (Yersinia pestis (strain Pestoides F)).